Consider the following 393-residue polypeptide: Probable hydrolase sll0100 (393 aa).

It belongs to the peptidase M20 family.

This Synechocystis sp. (strain ATCC 27184 / PCC 6803 / Kazusa) protein is Probable hydrolase sll0100.